The following is a 461-amino-acid chain: uncharacterized protein (461 aa).

LRR repeat units follow at residues 119–140 (NVKK…EKMS), 141–162 (LLEV…QHCK), and 163–184 (NLKE…EYLK). The LRRCT domain maps to 197 to 237 (NPCVGEGGQEYRRKVIRVLPNLTKLDDKPVTTTDHQEAIED).

This is an uncharacterized protein from Caenorhabditis elegans.